We begin with the raw amino-acid sequence, 160 residues long: Ribosomal RNA large subunit methyltransferase H (160 aa).

Residues leucine 76, glycine 108, and 127–132 (LGKMTW) contribute to the S-adenosyl-L-methionine site.

It belongs to the RNA methyltransferase RlmH family. Homodimer.

The protein resides in the cytoplasm. It catalyses the reaction pseudouridine(1915) in 23S rRNA + S-adenosyl-L-methionine = N(3)-methylpseudouridine(1915) in 23S rRNA + S-adenosyl-L-homocysteine + H(+). Functionally, specifically methylates the pseudouridine at position 1915 (m3Psi1915) in 23S rRNA. The polypeptide is Ribosomal RNA large subunit methyltransferase H (Rhizobium rhizogenes (strain K84 / ATCC BAA-868) (Agrobacterium radiobacter)).